Consider the following 264-residue polypeptide: Mitochondrial distribution and morphology protein 12 (264 aa).

The region spanning 1 to 232 is the SMP-LTD domain; the sequence is MSFDINWNKI…WPSWINLDFN (232 aa). The tract at residues 240 to 264 is disordered; it reads ESSSSAEESLPHRDDAQDFSADARA. The span at 248–264 shows a compositional bias: basic and acidic residues; the sequence is SLPHRDDAQDFSADARA.

This sequence belongs to the MDM12 family. In terms of assembly, component of the ER-mitochondria encounter structure (ERMES) or MDM complex, composed of MMM1, MDM10, MDM12 and MDM34. An MMM1 homodimer associates with one molecule of MDM12 on each side in a pairwise head-to-tail manner, and the SMP-LTD domains of MMM1 and MDM12 generate a continuous hydrophobic tunnel for phospholipid trafficking.

It localises to the mitochondrion outer membrane. The protein resides in the endoplasmic reticulum membrane. Component of the ERMES/MDM complex, which serves as a molecular tether to connect the endoplasmic reticulum (ER) and mitochondria. Components of this complex are involved in the control of mitochondrial shape and protein biogenesis, and function in nonvesicular lipid trafficking between the ER and mitochondria. MDM12 is required for the interaction of the ER-resident membrane protein MMM1 and the outer mitochondrial membrane-resident beta-barrel protein MDM10. The MDM12-MMM1 subcomplex functions in the major beta-barrel assembly pathway that is responsible for biogenesis of all mitochondrial outer membrane beta-barrel proteins, and acts in a late step after the SAM complex. The MDM10-MDM12-MMM1 subcomplex further acts in the TOM40-specific pathway after the action of the MDM12-MMM1 complex. Essential for establishing and maintaining the structure of mitochondria and maintenance of mtDNA nucleoids. The protein is Mitochondrial distribution and morphology protein 12 of Eremothecium gossypii (strain ATCC 10895 / CBS 109.51 / FGSC 9923 / NRRL Y-1056) (Yeast).